The following is a 148-amino-acid chain: Nucleoside diphosphate kinase (148 aa).

ATP contacts are provided by K10, F58, R86, T92, R103, and N113. Catalysis depends on H116, which acts as the Pros-phosphohistidine intermediate.

This sequence belongs to the NDK family. Mg(2+) serves as cofactor.

The protein resides in the cytoplasm. The catalysed reaction is a 2'-deoxyribonucleoside 5'-diphosphate + ATP = a 2'-deoxyribonucleoside 5'-triphosphate + ADP. It carries out the reaction a ribonucleoside 5'-diphosphate + ATP = a ribonucleoside 5'-triphosphate + ADP. Major role in the synthesis of nucleoside triphosphates other than ATP. The ATP gamma phosphate is transferred to the NDP beta phosphate via a ping-pong mechanism, using a phosphorylated active-site intermediate. The sequence is that of Nucleoside diphosphate kinase from Thermoplasma acidophilum (strain ATCC 25905 / DSM 1728 / JCM 9062 / NBRC 15155 / AMRC-C165).